We begin with the raw amino-acid sequence, 209 residues long: C-type lectin domain family 6 member A (209 aa).

The Cytoplasmic portion of the chain corresponds to 1 to 20 (MVQERHPQRKGVCWTLRLWS). Residues 21-43 (TAVISMLLLSTCFIASCMVTYQF) traverse the membrane as a helical; Signal-anchor for type II membrane protein segment. The Extracellular portion of the chain corresponds to 44–209 (TMEKPNRRLS…SICETKKIYL (166 aa)). Cystine bridges form between cysteine 64-cysteine 78 and cysteine 79-cysteine 90. Residues 86–203 (FGSSCYLIST…CDSKHNSICE (118 aa)) enclose the C-type lectin domain. Ca(2+)-binding residues include valine 116, asparagine 118, and glutamate 122. An N-linked (GlcNAc...) asparagine glycan is attached at asparagine 131. The Ca(2+) site is built by glutamate 168, asparagine 170, and glutamate 174. Alpha-D-mannopyranose-binding positions include 168 to 170 (EPN), glutamate 174, tryptophan 182, and 190 to 191 (ND). The cysteines at positions 176 and 194 are disulfide-linked. Residues asparagine 190, aspartate 191, and glutamate 203 each contribute to the Ca(2+) site.

Associated with FCER1G. Heterodimer with CLEC4D; this heterodimer forms a pattern recognition receptor (PRR) against fungal infection.

The protein resides in the cell membrane. Its function is as follows. Calcium-dependent lectin that acts as a pattern recognition receptor (PRR) of the innate immune system: specifically recognizes and binds alpha-mannans on C.albicans hypheas. Binding of C.albicans alpha-mannans to this receptor complex leads to phosphorylation of the immunoreceptor tyrosine-based activation motif (ITAM) of FCER1G, triggering activation of SYK, CARD9 and NF-kappa-B, consequently driving maturation of antigen-presenting cells and shaping antigen-specific priming of T-cells toward effector T-helper 1 and T-helper 17 cell subtypes. Also recognizes, in a mannose-dependent manner, allergens from house dust mite and fungi, by promoting cysteinyl leukotriene production. Recognizes soluble elements from the eggs of Shistosoma mansoni altering adaptive immune responses. The polypeptide is C-type lectin domain family 6 member A (CLEC6A) (Rattus norvegicus (Rat)).